The primary structure comprises 593 residues: Immunoglobulin G-binding protein G (593 aa).

Residues 1–33 form the signal peptide; that stretch reads MEKEKKVKYFLRKSAFGLASVSAAFLVGSTVFA. 5 repeat units span residues 104-140, 179-215, 254-290, 303-357, and 373-427. Residues 104–290 form a 3 X 37 AA repeats region; the sequence is LAKAKADALK…AKTVEGVKAL (187 aa). Residues 303–427 are 2 X 55 AA repeats; that stretch reads TYKLILNGKT…DATKTFTVTE (125 aa). The segment at 503–567 is disordered; that stretch reads PGDAPTEPEK…TLPTTGEGSN (65 aa). Residues 529 to 557 show a composition bias toward basic and acidic residues; sequence AKDDAKKDDTKKEDAKKPEAKKEDAKKAE. Positions 531–555 are 5 X 5 AA repeats of [DE]-D-A-K-K; the sequence is DDAKKDDTKKEDAKKPEAKKEDAKK. The short motif at 559–563 is the LPXTG sorting signal element; the sequence is LPTTG. T562 bears the Pentaglycyl murein peptidoglycan amidated threonine mark. Positions 563-593 are cleaved as a propeptide — removed by sortase; the sequence is GEGSNPFFTAAALAVMAGAGALAVASKRKED.

It is found in the secreted. Its subcellular location is the cell wall. The sequence is that of Immunoglobulin G-binding protein G (spg) from Streptococcus sp. group G.